Reading from the N-terminus, the 576-residue chain is Apolipoprotein N-acyltransferase 1 (576 aa).

Transmembrane regions (helical) follow at residues 15–35 (LILC…FSFF), 38–58 (GVFA…TSIW), 60–80 (AFLW…YWIP), 92–112 (FVSI…FFLF), 128–148 (YILL…FQIF), 168–188 (ICGV…FLIL), and 204–224 (IASL…IGYI). The region spanning 236 to 538 (LSVLMIQPDT…TGTRAFSIRL (303 aa)) is the CN hydrolase domain. The active-site Proton acceptor is E285. K355 is a catalytic residue. Catalysis depends on C446, which acts as the Nucleophile. Residues 549–569 (FGNSFLWIFCILILISRLIFV) traverse the membrane as a helical segment.

The protein belongs to the CN hydrolase family. Apolipoprotein N-acyltransferase subfamily.

It localises to the cell inner membrane. The catalysed reaction is N-terminal S-1,2-diacyl-sn-glyceryl-L-cysteinyl-[lipoprotein] + a glycerophospholipid = N-acyl-S-1,2-diacyl-sn-glyceryl-L-cysteinyl-[lipoprotein] + a 2-acyl-sn-glycero-3-phospholipid + H(+). Its pathway is protein modification; lipoprotein biosynthesis (N-acyl transfer). Catalyzes the phospholipid dependent N-acylation of the N-terminal cysteine of apolipoprotein, the last step in lipoprotein maturation. This chain is Apolipoprotein N-acyltransferase 1, found in Leptospira interrogans serogroup Icterohaemorrhagiae serovar copenhageni (strain Fiocruz L1-130).